A 424-amino-acid polypeptide reads, in one-letter code: FeMo cofactor biosynthesis protein NifB (424 aa).

In terms of domain architecture, Radical SAM core spans 12 to 261 (NDSSRHTYGR…PQMKHCARCR (250 aa)). 3 residues coordinate [4Fe-4S] cluster: Cys30, Cys34, and Cys37. 3 residues coordinate S-adenosyl-L-methionine: Gly84, Thr136, and Val188. [4Fe-4S] cluster-binding residues include Cys257 and Cys260.

Belongs to the radical SAM superfamily. NifB family. In terms of assembly, monomer. Requires [4Fe-4S] cluster as cofactor.

It functions in the pathway cofactor biosynthesis; Fe-Mo cofactor biosynthesis. Involved in the biosynthesis of the iron-molybdenum cofactor (FeMo-co or M-cluster) found in the dinitrogenase enzyme of the nitrogenase complex in nitrogen-fixing microorganisms. NifB catalyzes the crucial step of radical SAM-dependent carbide insertion that occurs concomitant with the insertion of a 9th sulfur and the rearrangement/coupling of two [4Fe-4S] clusters into a [8Fe-9S-C] cluster, the precursor to the M-cluster. The protein is FeMo cofactor biosynthesis protein NifB of Chlorobaculum tepidum (strain ATCC 49652 / DSM 12025 / NBRC 103806 / TLS) (Chlorobium tepidum).